The sequence spans 149 residues: Transcriptional repressor NrdR (149 aa).

A zinc finger spans residues 3–34 (CPFCTAEETKVIDSRLAADGYQIRRRRECIGC). Residues 49-139 (PYIIKNNGNR…VYLSFDDIEE (91 aa)) form the ATP-cone domain.

It belongs to the NrdR family. Zn(2+) serves as cofactor.

Negatively regulates transcription of bacterial ribonucleotide reductase nrd genes and operons by binding to NrdR-boxes. The chain is Transcriptional repressor NrdR from Haemophilus ducreyi (strain 35000HP / ATCC 700724).